A 496-amino-acid chain; its full sequence is Beta-amylase (496 aa).

Positions 54, 94, and 102 each coordinate substrate. Catalysis depends on glutamate 187, which acts as the Proton donor. Positions 296, 301, and 343 each coordinate substrate. Glutamate 381 (proton acceptor) is an active-site residue. Substrate contacts are provided by residues 382-383 (NA) and arginine 421. The segment at 455 to 496 (YNHGIPPLKRSGPKIPDDVLNEATKPIPPFPWDSETDMKVDG) is disordered.

Belongs to the glycosyl hydrolase 14 family.

It carries out the reaction Hydrolysis of (1-&gt;4)-alpha-D-glucosidic linkages in polysaccharides so as to remove successive maltose units from the non-reducing ends of the chains.. The chain is Beta-amylase (BMY1) from Medicago sativa (Alfalfa).